A 536-amino-acid chain; its full sequence is MEQEENHSADHLSAQPGNGNELEESSVKERCFEQREALVGEPRCVICGRYGEYICDQTDDDICSVECKTILLSKLSAETRPVVKAAKRVNLPVGDESFCIRDENFPKIPSMHDGQIASLRSKLDICVKGEDVPDPIMCFSSSGLPEKLVLNLEAAGYVMPTPVQMQVIPSSICNRSLLVSADTGSGKTASFLVPIIAHCSHVRSERCTDKQGPLAIVLAPTRELCLQVEEQAKVLGKGLPFKTALVVGGDPLAQQIYRIENGIELIVGTPGRLIDLLMKHNVDLNKVDVFVLDEVDCLLERGFRDQVMQIFQALSHPQVMMFSATVNSEVEKMSNSLAKNAIHISCGNPSRPNKSVKQVVIWVESKQKKQKIFEIMTSKQHFKPPAVVFVSSRIGADLLSEAITVATGLKVVSIHGDKTMNERRESLRRFLTGEVSVVVCTGVLGRGMDLLKVRQVILFDMPNSIDEYVHQVGRASRMGVEGMAIVFVNEEDRNLFRELVQILKTAGAPIPRELANSKYTTGIPLGGGKKRKLKSR.

A compositionally biased stretch (basic and acidic residues) spans 1-10 (MEQEENHSAD). The segment at 1-25 (MEQEENHSADHLSAQPGNGNELEES) is disordered. Residues 40 to 69 (GEPRCVICGRYGEYICDQTDDDICSVECKT) form an HIT-type zinc finger. Positions 137-165 (MCFSSSGLPEKLVLNLEAAGYVMPTPVQM) match the Q motif motif. The region spanning 168–344 (IPSSICNRSL…NSLAKNAIHI (177 aa)) is the Helicase ATP-binding domain. An ATP-binding site is contributed by 181 to 188 (ADTGSGKT). The DEAD box signature appears at 293-296 (DEVD). Residues 355–518 (SVKQVVIWVE…PIPRELANSK (164 aa)) form the Helicase C-terminal domain.

This sequence belongs to the DEAD box helicase family. DDX59 subfamily.

The enzyme catalyses ATP + H2O = ADP + phosphate + H(+). The polypeptide is DEAD-box ATP-dependent RNA helicase 41 (Oryza sativa subsp. japonica (Rice)).